A 203-amino-acid chain; its full sequence is MACGATLKRTLDFDPLLSPASPKRRRCAPLSAPTSAAASPSSAAAATAASFSAAAASPQKYLRMEPSPFGDVSSRLTTEQILYNIKQEYKRMQKRRHLETSFQQTDPCCTSDAQPHAFLLSGPASPGTPSATSSPLKKEQPLFTLRQVGMICERLLKEREEKVREEYEEILNTKLAEQYDAFVKFTHDQIMRRYGEQPASYVS.

Phosphoserine occurs at positions 18 and 21. The Nuclear localization signal signature appears at 22–27 (PKRRRC). Ser57 is modified (phosphoserine). Residues 200–203 (SYVS) carry the SYVS motif motif.

Belongs to the akirin family. In terms of assembly, homodimer. Interacts with IPO9; the interaction is direct. Associates with 20S and 26S proteasomes. Interacts with SMARCD1; promoting SWI/SNF complex recruitment. Interacts with NFKBIZ. Interacts with YWHAB. In terms of processing, polyubiquitinated. Polyubiquitination is dependent of UBR5 that extends pre-ubiquitinated AKIRIN2. Widely expressed. Most abundant in the lung, followed by the skeletal muscle, heart, liver, fat, thymus, lymph node, small intestine, kidney and spleen. In skeletal muscle, expressed at higher level in fast extensor digitorum longus (EDL) and longissimus lumborum (LL) muscles than in slow soleus (SOL) muscles.

Its subcellular location is the nucleus. It is found in the cytoplasm. The protein localises to the membrane. In terms of biological role, molecular adapter that acts as a bridge between a variety of multiprotein complexes, and which is involved in embryonic development, immunity, myogenesis and brain development. Plays a key role in nuclear protein degradation by promoting import of proteasomes into the nucleus: directly binds to fully assembled 20S proteasomes at one end and to nuclear import receptor IPO9 at the other end, bridging them together and mediating the import of pre-assembled proteasome complexes through the nuclear pore. Involved in innate immunity by regulating the production of interleukin-6 (IL6) downstream of Toll-like receptor (TLR): acts by bridging the NF-kappa-B inhibitor NFKBIZ and the SWI/SNF complex, leading to promote induction of IL6. Also involved in adaptive immunity by promoting B-cell activation. Involved in brain development: required for the survival and proliferation of cerebral cortical progenitor cells. Involved in myogenesis: required for skeletal muscle formation and skeletal development, possibly by regulating expression of muscle differentiation factors. In Sus scrofa (Pig), this protein is Akirin-2.